The sequence spans 341 residues: Serpentine receptor class beta-1 (341 aa).

7 helical membrane passes run 22-42, 66-86, 102-122, 141-161, 188-208, 240-260, and 279-299; these read AQFWTFIFSTLAVPALFIFLL, FLFAVVLALTFGYHILVPLFI, GQLSLTLFITLQMIMPFGFSI, LGPLLIFVLIGIDLILLFTVF, CWILLYAELGNLLCNCIILLV, LIVSFTHILFIGWYLGVTIFI, and GVYISVPTYNLTIVFVGIKAL.

The protein belongs to the nematode receptor-like protein srb family.

Its subcellular location is the membrane. This is Serpentine receptor class beta-1 (srb-1) from Caenorhabditis elegans.